Consider the following 433-residue polypeptide: Acetyl-CoA acetyltransferase erg10A, mitochondrial (433 aa).

The transit peptide at Met1 to Leu34 directs the protein to the mitochondrion. Catalysis depends on Cys124, which acts as the Acyl-thioester intermediate. Residue Tyr219 coordinates K(+). CoA is bound by residues Asn229 and Lys262. K(+) is bound at residue Ala280. Ser284 contributes to the CoA binding site. Residues His387 and Cys415 each act as proton acceptor in the active site. Asn416 is a chloride binding site.

The protein belongs to the thiolase-like superfamily. Thiolase family. Homotetramer. K(+) is required as a cofactor.

The protein localises to the mitochondrion. The enzyme catalyses 2 acetyl-CoA = acetoacetyl-CoA + CoA. The protein operates within metabolic intermediate biosynthesis; (R)-mevalonate biosynthesis; (R)-mevalonate from acetyl-CoA: step 1/3. Functionally, mitochondrial acetyl-CoA acetyltransferase that catalyzes both the formation and degradation of acetoacetyl-CoA. Has no overlapping function with erg10B and seems not to be involved in ergosterol biosynthesis. Plays an important role in growth, morphogenesis and maintaining mitochondrial function including the response to oxidative stresses. In Aspergillus fumigatus (strain ATCC MYA-4609 / CBS 101355 / FGSC A1100 / Af293) (Neosartorya fumigata), this protein is Acetyl-CoA acetyltransferase erg10A, mitochondrial.